Reading from the N-terminus, the 96-residue chain is Co-chaperonin GroES (96 aa).

This sequence belongs to the GroES chaperonin family. Heptamer of 7 subunits arranged in a ring. Interacts with the chaperonin GroEL.

It localises to the cytoplasm. Its function is as follows. Together with the chaperonin GroEL, plays an essential role in assisting protein folding. The GroEL-GroES system forms a nano-cage that allows encapsulation of the non-native substrate proteins and provides a physical environment optimized to promote and accelerate protein folding. GroES binds to the apical surface of the GroEL ring, thereby capping the opening of the GroEL channel. This chain is Co-chaperonin GroES, found in Legionella jeonii.